The primary structure comprises 112 residues: Protein 4.2 (112 aa).

A disordered region spans residues 64-93 (KPDGLNHQVTQGKKSHTQSQQTGPTTLTSD). Positions 70-92 (HQVTQGKKSHTQSQQTGPTTLTS) are enriched in polar residues.

The sequence is that of Protein 4.2 from Escherichia phage T7 (Bacteriophage T7).